The chain runs to 275 residues: Hydroxyethylthiazole kinase (275 aa).

Residue M53 participates in substrate binding. Residues R128 and S174 each coordinate ATP. Residue G201 coordinates substrate.

The protein belongs to the Thz kinase family. Mg(2+) is required as a cofactor.

The catalysed reaction is 5-(2-hydroxyethyl)-4-methylthiazole + ATP = 4-methyl-5-(2-phosphooxyethyl)-thiazole + ADP + H(+). Its pathway is cofactor biosynthesis; thiamine diphosphate biosynthesis; 4-methyl-5-(2-phosphoethyl)-thiazole from 5-(2-hydroxyethyl)-4-methylthiazole: step 1/1. In terms of biological role, catalyzes the phosphorylation of the hydroxyl group of 4-methyl-5-beta-hydroxyethylthiazole (THZ). This Kineococcus radiotolerans (strain ATCC BAA-149 / DSM 14245 / SRS30216) protein is Hydroxyethylthiazole kinase.